A 238-amino-acid chain; its full sequence is Purine nucleoside phosphorylase DeoD-type (238 aa).

His4 serves as a coordination point for a purine D-ribonucleoside. Phosphate-binding positions include Gly20, Arg24, Arg43, and 87–90 (RVGS). A purine D-ribonucleoside contacts are provided by residues 179–181 (EME) and 203–204 (SD). The active-site Proton donor is Asp204.

The protein belongs to the PNP/UDP phosphorylase family. In terms of assembly, homohexamer; trimer of homodimers.

It catalyses the reaction a purine D-ribonucleoside + phosphate = a purine nucleobase + alpha-D-ribose 1-phosphate. The catalysed reaction is a purine 2'-deoxy-D-ribonucleoside + phosphate = a purine nucleobase + 2-deoxy-alpha-D-ribose 1-phosphate. Catalyzes the reversible phosphorolytic breakdown of the N-glycosidic bond in the beta-(deoxy)ribonucleoside molecules, with the formation of the corresponding free purine bases and pentose-1-phosphate. The protein is Purine nucleoside phosphorylase DeoD-type of Haemophilus influenzae (strain 86-028NP).